The sequence spans 205 residues: StAR-related lipid transfer protein 4 (205 aa).

The 205-residue stretch at 1–205 (MEGLSDVASF…NFYGDLRKAL (205 aa)) folds into the START domain.

It catalyses the reaction cholesterol(in) = cholesterol(out). Functionally, involved in the intracellular transport of cholesterol. Binds cholesterol or other sterols. This Homo sapiens (Human) protein is StAR-related lipid transfer protein 4 (STARD4).